Here is a 103-residue protein sequence, read N- to C-terminus: Large ribosomal subunit protein bL21 (103 aa).

The protein belongs to the bacterial ribosomal protein bL21 family. In terms of assembly, part of the 50S ribosomal subunit. Contacts protein L20.

Its function is as follows. This protein binds to 23S rRNA in the presence of protein L20. The chain is Large ribosomal subunit protein bL21 from Acidovorax sp. (strain JS42).